We begin with the raw amino-acid sequence, 174 residues long: Glycine-rich protein 5 (174 aa).

The first 22 residues, methionine 1–alanine 22, serve as a signal peptide directing secretion.

Mostly expressed in immature seed pods, and, to a lower extent, in stems and leaves. Present in phloem and epiderm in leaves, stems, flowers and fruits.

It is found in the vacuole. Functionally, involved in organ growth by promoting cell elongation processes. In Arabidopsis thaliana (Mouse-ear cress), this protein is Glycine-rich protein 5.